The chain runs to 361 residues: Queuine tRNA-ribosyltransferase (361 aa).

D92 acts as the Proton acceptor in catalysis. Substrate is bound by residues 92-96 (DSGGF), D146, Q189, and G216. An RNA binding region spans residues 247–253 (GVGKPAD). The Nucleophile role is filled by D266. The tract at residues 271–275 (TRSGR) is RNA binding; important for wobble base 34 recognition. Zn(2+) is bound by residues C304, C306, C309, and H335.

The protein belongs to the queuine tRNA-ribosyltransferase family. In terms of assembly, homodimer. Within each dimer, one monomer is responsible for RNA recognition and catalysis, while the other monomer binds to the replacement base PreQ1. The cofactor is Zn(2+).

It carries out the reaction 7-aminomethyl-7-carbaguanine + guanosine(34) in tRNA = 7-aminomethyl-7-carbaguanosine(34) in tRNA + guanine. Its pathway is tRNA modification; tRNA-queuosine biosynthesis. Catalyzes the base-exchange of a guanine (G) residue with the queuine precursor 7-aminomethyl-7-deazaguanine (PreQ1) at position 34 (anticodon wobble position) in tRNAs with GU(N) anticodons (tRNA-Asp, -Asn, -His and -Tyr). Catalysis occurs through a double-displacement mechanism. The nucleophile active site attacks the C1' of nucleotide 34 to detach the guanine base from the RNA, forming a covalent enzyme-RNA intermediate. The proton acceptor active site deprotonates the incoming PreQ1, allowing a nucleophilic attack on the C1' of the ribose to form the product. After dissociation, two additional enzymatic reactions on the tRNA convert PreQ1 to queuine (Q), resulting in the hypermodified nucleoside queuosine (7-(((4,5-cis-dihydroxy-2-cyclopenten-1-yl)amino)methyl)-7-deazaguanosine). This is Queuine tRNA-ribosyltransferase from Rickettsia bellii (strain OSU 85-389).